Here is a 144-residue protein sequence, read N- to C-terminus: Large ribosomal subunit protein uL15 (144 aa).

Residues 1 to 52 (MIKLESLQDPSPRKRRKKLLGRGPGSGHGKTSGRGHKGDGSRSGYKRRFGYE) form a disordered region. Residues 22-32 (RGPGSGHGKTS) show a composition bias toward gly residues.

The protein belongs to the universal ribosomal protein uL15 family. In terms of assembly, part of the 50S ribosomal subunit.

Functionally, binds to the 23S rRNA. In Chlamydia felis (strain Fe/C-56) (Chlamydophila felis), this protein is Large ribosomal subunit protein uL15.